The primary structure comprises 299 residues: N-acetylmuramic acid 6-phosphate etherase (299 aa).

The region spanning 55-218 is the SIS domain; that stretch reads CINCLEKNGR…STTVMVKMGK (164 aa). The Proton donor role is filled by glutamate 83. Glutamate 114 is a catalytic residue.

This sequence belongs to the GCKR-like family. MurNAc-6-P etherase subfamily. As to quaternary structure, homodimer.

The enzyme catalyses N-acetyl-D-muramate 6-phosphate + H2O = N-acetyl-D-glucosamine 6-phosphate + (R)-lactate. It participates in amino-sugar metabolism; N-acetylmuramate degradation. Functionally, specifically catalyzes the cleavage of the D-lactyl ether substituent of MurNAc 6-phosphate, producing GlcNAc 6-phosphate and D-lactate. The protein is N-acetylmuramic acid 6-phosphate etherase of Pseudothermotoga lettingae (strain ATCC BAA-301 / DSM 14385 / NBRC 107922 / TMO) (Thermotoga lettingae).